We begin with the raw amino-acid sequence, 360 residues long: Peptide chain release factor 1 (360 aa).

N5-methylglutamine is present on Q235.

Belongs to the prokaryotic/mitochondrial release factor family. Methylated by PrmC. Methylation increases the termination efficiency of RF1.

It localises to the cytoplasm. Functionally, peptide chain release factor 1 directs the termination of translation in response to the peptide chain termination codons UAG and UAA. The polypeptide is Peptide chain release factor 1 (Burkholderia cenocepacia (strain ATCC BAA-245 / DSM 16553 / LMG 16656 / NCTC 13227 / J2315 / CF5610) (Burkholderia cepacia (strain J2315))).